A 246-amino-acid polypeptide reads, in one-letter code: UDP-N-acetyl-D-mannosaminuronic acid transferase (246 aa).

Belongs to the glycosyltransferase 26 family.

The catalysed reaction is UDP-N-acetyl-alpha-D-mannosaminouronate + N-acetyl-alpha-D-glucosaminyl-di-trans,octa-cis-undecaprenyl diphosphate = beta-D-ManNAcA-(1-&gt;4)-alpha-D-GlcNAc-di-trans,octa-cis-undecaprenyl diphosphate + UDP + H(+). The protein operates within bacterial outer membrane biogenesis; enterobacterial common antigen biosynthesis. In terms of biological role, catalyzes the synthesis of Und-PP-GlcNAc-ManNAcA (Lipid II), the second lipid-linked intermediate involved in enterobacterial common antigen (ECA) synthesis. This chain is UDP-N-acetyl-D-mannosaminuronic acid transferase, found in Salmonella schwarzengrund (strain CVM19633).